The following is a 236-amino-acid chain: MGVEGCTKCIKYLLFVFNFVFWLAGGVILGVALWLRHDPQTTNLLYLELGDKPAPNTFYVGIYILIAVGAVMMFVGFLGCYGAIQESQCLLGTFFTCLVILFACEVAAGIWGFVNKDQIAKDVKQFYDQALQQAVVDDDANNAKAVVKTFHETLDCCGSSTLAALTTSVLKNNLCPSGSNIISNLLKKDCHQKIDELFSGKLYLIGIAAIVVAVIMIFEMILSMVLCCGIRNSSVY.

At 1 to 12 the chain is on the cytoplasmic side; that stretch reads MGVEGCTKCIKY. The helical transmembrane segment at 13-33 threads the bilayer; that stretch reads LLFVFNFVFWLAGGVILGVAL. Residues 34 to 63 are Extracellular-facing; the sequence is WLRHDPQTTNLLYLELGDKPAPNTFYVGIY. A helical transmembrane segment spans residues 64–84; that stretch reads ILIAVGAVMMFVGFLGCYGAI. Over 85–89 the chain is Cytoplasmic; sequence QESQC. Residues 90–112 form a helical membrane-spanning segment; that stretch reads LLGTFFTCLVILFACEVAAGIWG. The Extracellular segment spans residues 113–201; sequence FVNKDQIAKD…QKIDELFSGK (89 aa). 2 disulfides stabilise this stretch: Cys156/Cys190 and Cys157/Cys175. A helical membrane pass occupies residues 202–224; that stretch reads LYLIGIAAIVVAVIMIFEMILSM. Glu219 contacts cholesterol. At 225–236 the chain is on the cytoplasmic side; sequence VLCCGIRNSSVY.

It belongs to the tetraspanin (TM4SF) family. In terms of assembly, homodimer. Part of a complex composed of CD19, CR2/CD21, CD81 and IFITM1/CD225 in the membrane of mature B cells. Interacts (via the second extracellular domain) with CD19; this interaction is initiated early during biosynthesis in the ER and enables trafficking of only properly folded CD19. Part of a complex that includes MHC class II/HLA-DR molecules and IFITM1. Interacts with IFITM1. Interacts with IFITM2 and IFITM3. Part of integrin-tetraspanin complex composed of CD9, CD81, beta-1 and beta-2 integrins in the membrane of monocyte/macrophages. Interacts (via the second extracellular domain) with integrin ITGAV:ITGB3. Interacts with CD247/CD3 zeta, ICAM1 and CD9 at the immune synapse on T cell membrane. Part of a GPCR-tetraspanin complex consisting at least of ADGRG1, CD81, possibly CD9, and GNA11 in which CD81 enhances the association of ADGRG1 with GNA11. Part of a complex composed of CD9, CD81, PTGFRN and IGSF8. Interacts directly with IGSF8. Interacts with CD53 and SCIMP. Interacts with SAMHD1 (via its C-terminus). Interacts with glypican GPC3 and with the transcriptional repressor HHEX; binding to GPC3 decreases the availability of free CD81 for binding to HHEX, resulting in nuclear translocation of HHEX and transcriptional repression. Interacts with CLDN1. Interacts with CLDN6 and CLDN9. Not glycosylated. Post-translationally, likely constitutively palmitoylated at low levels. Protein palmitoylation is up-regulated upon coligation of BCR and CD9-C2R-CD81 complexes in lipid rafts.

The protein localises to the cell membrane. Its subcellular location is the basolateral cell membrane. Functionally, structural component of specialized membrane microdomains known as tetraspanin-enriched microdomains (TERMs), which act as platforms for receptor clustering and signaling. Essential for trafficking and compartmentalization of CD19 receptor on the surface of activated B cells. Upon initial encounter with microbial pathogens, enables the assembly of CD19-CR2/CD21 and B cell receptor (BCR) complexes at signaling TERMs, lowering the threshold dose of antigen required to trigger B cell clonal expansion and antibody production. In T cells, facilitates the localization of CD247/CD3 zeta at antigen-induced synapses with B cells, providing for costimulation and polarization toward T helper type 2 phenotype. Present in MHC class II compartments, may also play a role in antigen presentation. Can act both as positive and negative regulator of homotypic or heterotypic cell-cell fusion processes. Positively regulates sperm-egg fusion and may be involved in acrosome reaction. In myoblasts, associates with CD9 and PTGFRN and inhibits myotube fusion during muscle regeneration. In macrophages, associates with CD9 and beta-1 and beta-2 integrins, and prevents macrophage fusion into multinucleated giant cells specialized in ingesting complement-opsonized large particles. Also prevents the fusion of mononuclear cell progenitors into osteoclasts in charge of bone resorption. May regulate the compartmentalization of enzymatic activities. In T cells, defines the subcellular localization of dNTPase SAMHD1 and permits its degradation by the proteasome, thereby controlling intracellular dNTP levels. Also involved in cell adhesion and motility. Positively regulates integrin-mediated adhesion of macrophages, particularly relevant for the inflammatory response in the lung. The sequence is that of CD81 antigen (CD81) from Chlorocebus aethiops (Green monkey).